Here is a 715-residue protein sequence, read N- to C-terminus: Targeting protein for Xklp2-B (715 aa).

The segment at 36–167 is disordered; it reads NAENIPPDQK…LTMPATPTVL (132 aa). Over residues 47 to 56 the composition is skewed to polar residues; sequence LSETSVNAEQ. Basic residues predominate over residues 85 to 103; the sequence is QTKRSARRMSKKHRQKILL. The segment covering 104 to 115 has biased composition (basic and acidic residues); that stretch reads KMKETHLEKETA. A compositionally biased stretch (polar residues) spans 141 to 152; that stretch reads QPTSSHHGTTSP. A Phosphoserine; by plk1 modification is found at S204. Disordered stretches follow at residues 260-291 and 314-337; these read PPTS…EEAS and RSRQ…TNPK.

The protein belongs to the TPX2 family. Associates with microtubules. Interacts with aurka and plk1. Interacts with kif15. Post-translationally, phosphorylated during mitosis. Hyperphosphorylated upon assembly of microtubules.

It localises to the nucleus. It is found in the cytoplasm. The protein localises to the cytoskeleton. The protein resides in the spindle. Its subcellular location is the spindle pole. Spindle assembly factor. Required for normal assembly of mitotic spindles. Mediates the binding kif15 and aurka to spindle microtubules. Required for targeting kif15 to microtubule minus ends. Activates aurka by promoting its autophosphorylation and protects the phosphorylated residue against dephosphorylation. This Xenopus laevis (African clawed frog) protein is Targeting protein for Xklp2-B (tpx2-b).